We begin with the raw amino-acid sequence, 534 residues long: Peptide chain release factor 3 (534 aa).

One can recognise a tr-type G domain in the interval 9-278 (ARRRTFAIIS…FFVEHAPSPQ (270 aa)). Residues 18 to 25 (SHPDAGKT), 86 to 90 (DTPGH), and 140 to 143 (NKLD) contribute to the GTP site.

It belongs to the TRAFAC class translation factor GTPase superfamily. Classic translation factor GTPase family. PrfC subfamily.

The protein resides in the cytoplasm. Its function is as follows. Increases the formation of ribosomal termination complexes and stimulates activities of RF-1 and RF-2. It binds guanine nucleotides and has strong preference for UGA stop codons. It may interact directly with the ribosome. The stimulation of RF-1 and RF-2 is significantly reduced by GTP and GDP, but not by GMP. In Xylella fastidiosa (strain M12), this protein is Peptide chain release factor 3.